A 61-amino-acid chain; its full sequence is UPF0391 membrane protein Bpro_0066 (61 aa).

A run of 2 helical transmembrane segments spans residues 5–25 (AIIF…GVAA) and 33–53 (ILFG…ALGV).

This sequence belongs to the UPF0391 family.

It localises to the cell membrane. The protein is UPF0391 membrane protein Bpro_0066 of Polaromonas sp. (strain JS666 / ATCC BAA-500).